Consider the following 337-residue polypeptide: Ribosomal RNA small subunit methyltransferase H (337 aa).

Residues 45-47 (GGH), Asp-64, His-91, Asp-112, and Gln-119 contribute to the S-adenosyl-L-methionine site.

Belongs to the methyltransferase superfamily. RsmH family.

Its subcellular location is the cytoplasm. It carries out the reaction cytidine(1402) in 16S rRNA + S-adenosyl-L-methionine = N(4)-methylcytidine(1402) in 16S rRNA + S-adenosyl-L-homocysteine + H(+). Functionally, specifically methylates the N4 position of cytidine in position 1402 (C1402) of 16S rRNA. This is Ribosomal RNA small subunit methyltransferase H from Cutibacterium acnes (strain DSM 16379 / KPA171202) (Propionibacterium acnes).